An 877-amino-acid chain; its full sequence is Phosphoenolpyruvate carboxylase (877 aa).

Residues His138 and Lys544 contribute to the active site.

It belongs to the PEPCase type 1 family. Mg(2+) serves as cofactor.

It carries out the reaction oxaloacetate + phosphate = phosphoenolpyruvate + hydrogencarbonate. In terms of biological role, forms oxaloacetate, a four-carbon dicarboxylic acid source for the tricarboxylic acid cycle. The sequence is that of Phosphoenolpyruvate carboxylase from Vibrio vulnificus (strain CMCP6).